A 961-amino-acid polypeptide reads, in one-letter code: MTAIEDILQITTDPSDTRGYSLLKSEEVPQGSTLGVDFIDTLLLYQLTENEKLDKPFEYLNDCFRRNQQQKRITKNKPNAESLHSTFQEIDRLVIGYGVVALQIENFCMNGAFINYITGIVSNVNSYTDFLSQIIQRAILEGTALDLLNAVFPTLLEYCNKHVSHFDLNESVIYNNVLTIFELFVTFKPIAEIFTKIDGFFADYSCKPQDFERKTILGPILSLSPIEAAVAIRNYGDNLLRSKQQTAMIHESLQAEHKVVIDRLFFIVDKLVRGSLNSRTDMISYFAHIANKNHLRRADHPPFKELSSNGFMSNITLLLVRFSQPFLDISYKKIDKIDANYFNNPSLFIDLSGETRLNSDFKEADAFYDKNRKTADSKPNFISDCFFLTLTYLHYGLGGTLSFEEKMGSEIKALKEEIEKVKKIAANHDVFARFITAQLSKMEKALKTTESLRFALQGFFAHRSLQLEVFDFICGASTFLIRVVDPEHEFPFKQIKLPLIPDQIGVENVDNADFLRAHAPVPFKYYPEFVVEGPVNYSLYISKYQTSPIFRNPRLGSFVEFTTMVLRCPELVSNPHLKGKLVQLLSVGAMPLTDNSPGFMMDIFEHDELVNKNLLYALLDFYVIVEKTGSSSQFYDKFNSRYSISIILEELYYKIPSYKNQLIWQSQNNADFFVRFVARMLNDLTFLLDEGLSNLAEVHNIQNELDNRARGAPPTREEEDKELQTRLASASRQAKSSCGLADKSMKLFEIYSKDIPAAFVTPEIVYRLASMLNYNLESLVGPKCGELKVKDPQSYSFNPKDLLKALTTVYINLSEQSEFISAVAKDERSFNRNLFVRAVDILGRKTGLASPEFIEKLLNFANKAEEQRKADEEEDLEYGDVPDEFLDPLMYTIMKDPVILPASKMNIDRSTIKAHLLSDSTDPFNRMPLKLEDVTPNEELRQKILCFKKQKKEEAKHKASE.

The region spanning 880–954 (DVPDEFLDPL…LCFKKQKKEE (75 aa)) is the U-box domain.

It belongs to the ubiquitin conjugation factor E4 family. Interacts with CDC48. Interacts with the ubiquitin-like domain of RAD23 and DSK2. Interacts with PEX29.

The protein localises to the cytoplasm. It localises to the nucleus. The catalysed reaction is S-ubiquitinyl-[E2 ubiquitin-conjugating enzyme]-L-cysteine + [acceptor protein]-L-lysine = [E2 ubiquitin-conjugating enzyme]-L-cysteine + N(6)-ubiquitinyl-[acceptor protein]-L-lysine.. It functions in the pathway protein modification; protein ubiquitination. E4 ubiquitin chain-elongation enzyme specifically involved in polyubiquitin chain assembly. Binds to CDC48 and elongates mono- and diubiquitinated ERAD substrates presented by the UFD1-NPL4-CDC48/p97 (UNC) AAA ATPase complex to a chain length of 4 to 6 ubiquitin moieties. Delivers these polyubiquitinated substrates to RAD23 and DSK2, which target them to the proteasome. Has E3 ubiquitin-protein ligase activity, accepting ubiquitin from its cognate E2 ubiquitin-conjugating enzyme UBC4. Enhances ubiquitination at 'Lys-48', but not at 'Lys-29' of the Ub moiety. Promotes ubiquitin chain elongation at 'Lys-48' on the DOA10 substrate PEX29. Also involved in the proteolytic processing of the ER-bound transcription factor SPT23. This chain is E4 ubiquitin-protein ligase UFD2 (UFD2), found in Saccharomyces cerevisiae (strain ATCC 204508 / S288c) (Baker's yeast).